A 471-amino-acid chain; its full sequence is Variant surface glycoprotein WRATAT A (471 aa).

A signal peptide spans 1–18; that stretch reads MSVLFLLLAITRTASVKA. Asn61 and Asn133 each carry an N-linked (GlcNAc...) asparagine glycan. The tract at residues 373–457 is disordered; the sequence is QEQTLATTGT…ANTTGSSNSF (85 aa). The segment covering 379 to 392 has biased composition (low complexity); it reads TTGTKSSSPQSTQQ. Disulfide bonds link Cys401/Cys414 and Cys410/Cys427. Residues 401–447 show a composition bias toward basic and acidic residues; the sequence is CNDKAKETECNSPCKWDKEEKDEKKRCKLSEEGKQAEKENQEGKDGK. The segment covering 448–457 has biased composition (polar residues); it reads ANTTGSSNSF. Residue Asn449 is glycosylated (N-linked (GlcNAc...) asparagine). Ser454 is lipidated: GPI-anchor amidated serine. The propeptide at 455–471 is removed in mature form; sequence NSFVIKTSPLLLAVLLL.

The protein resides in the cell membrane. Functionally, VSG forms a coat on the surface of the parasite. The trypanosome evades the immune response of the host by expressing a series of antigenically distinct VSGs from an estimated 1000 VSG genes. The sequence is that of Variant surface glycoprotein WRATAT A from Trypanosoma brucei rhodesiense.